A 408-amino-acid chain; its full sequence is Elongation factor Tu, chloroplastic (408 aa).

The tr-type G domain maps to 10 to 213; the sequence is KPHVNIGTIG…KVDEYIPTPE (204 aa). The G1 stretch occupies residues 19–26; that stretch reads GHVDHGKT. A GTP-binding site is contributed by 19–26; that stretch reads GHVDHGKT. Thr-26 provides a ligand contact to Mg(2+). The segment at 59-63 is G2; that stretch reads GITIN. Residues 80–83 are G3; it reads DCPG. GTP contacts are provided by residues 80–84 and 135–138; these read DCPGH and NKAD. Positions 135–138 are G4; the sequence is NKAD. The interval 173–175 is G5; that stretch reads SAL.

Belongs to the TRAFAC class translation factor GTPase superfamily. Classic translation factor GTPase family. EF-Tu/EF-1A subfamily.

It localises to the plastid. The protein resides in the chloroplast. It carries out the reaction GTP + H2O = GDP + phosphate + H(+). Functionally, GTP hydrolase that promotes the GTP-dependent binding of aminoacyl-tRNA to the A-site of ribosomes during protein biosynthesis. The chain is Elongation factor Tu, chloroplastic (tufA) from Guillardia theta (Cryptophyte).